The primary structure comprises 242 residues: Pyridoxine 5'-phosphate synthase (242 aa).

Residue asparagine 7 participates in 3-amino-2-oxopropyl phosphate binding. 1-deoxy-D-xylulose 5-phosphate is bound at residue aspartate 9 to histidine 10. A 3-amino-2-oxopropyl phosphate-binding site is contributed by arginine 18. The active-site Proton acceptor is histidine 43. 1-deoxy-D-xylulose 5-phosphate contacts are provided by arginine 45 and histidine 50. The active-site Proton acceptor is glutamate 70. Threonine 100 lines the 1-deoxy-D-xylulose 5-phosphate pocket. Histidine 190 acts as the Proton donor in catalysis. 3-amino-2-oxopropyl phosphate-binding positions include glycine 191 and glycine 212–histidine 213.

The protein belongs to the PNP synthase family. As to quaternary structure, homooctamer; tetramer of dimers.

Its subcellular location is the cytoplasm. The catalysed reaction is 3-amino-2-oxopropyl phosphate + 1-deoxy-D-xylulose 5-phosphate = pyridoxine 5'-phosphate + phosphate + 2 H2O + H(+). It functions in the pathway cofactor biosynthesis; pyridoxine 5'-phosphate biosynthesis; pyridoxine 5'-phosphate from D-erythrose 4-phosphate: step 5/5. Functionally, catalyzes the complicated ring closure reaction between the two acyclic compounds 1-deoxy-D-xylulose-5-phosphate (DXP) and 3-amino-2-oxopropyl phosphate (1-amino-acetone-3-phosphate or AAP) to form pyridoxine 5'-phosphate (PNP) and inorganic phosphate. The protein is Pyridoxine 5'-phosphate synthase of Thermodesulfovibrio yellowstonii (strain ATCC 51303 / DSM 11347 / YP87).